The chain runs to 243 residues: HTH-type transcriptional regulator MlrA (243 aa).

In terms of domain architecture, HTH merR-type spans 3–72 (LYTIGEVALL…VSKVKMLLSN (70 aa)). The H-T-H motif DNA-binding region spans 6-25 (IGEVALLCDINPVTLRAWQR).

Interacts with DgcM and PdeR.

With respect to regulation, activity is regulated by DgcM and PdeR. Functionally, activates transcription of csgD, the master regulator of biofilm formation, by binding to its promoter region. Also controls the transcription of cadC and ibaG. Part of a signaling cascade that regulates curli biosynthesis. The cascade is composed of two c-di-GMP control modules, in which c-di-GMP controlled by the DgcE/PdeH pair (module I) regulates the activity of the DgcM/PdeR pair (module II), which in turn regulates activity of the transcription factor MlrA. This Escherichia coli (strain K12) protein is HTH-type transcriptional regulator MlrA.